The sequence spans 249 residues: ATP synthase subunit a (249 aa).

The next 6 membrane-spanning stretches (helical) occupy residues Phe26–Leu46, Phe84–Phe104, Ile114–Phe134, Leu143–Ile163, Ile185–Ile205, and Thr208–Leu228.

The protein belongs to the ATPase A chain family. As to quaternary structure, F-type ATPases have 2 components, CF(1) - the catalytic core - and CF(0) - the membrane proton channel. CF(1) has five subunits: alpha(3), beta(3), gamma(1), delta(1), epsilon(1). CF(0) has three main subunits: a(1), b(2) and c(9-12). The alpha and beta chains form an alternating ring which encloses part of the gamma chain. CF(1) is attached to CF(0) by a central stalk formed by the gamma and epsilon chains, while a peripheral stalk is formed by the delta and b chains.

Its subcellular location is the cell inner membrane. Functionally, key component of the proton channel; it plays a direct role in the translocation of protons across the membrane. This is ATP synthase subunit a from Brucella ovis (strain ATCC 25840 / 63/290 / NCTC 10512).